A 96-amino-acid polypeptide reads, in one-letter code: Neutrophil defensin 3 (96 aa).

Residues 1-19 form the signal peptide; that stretch reads MRTLVILAAILLVALQAQA. The propeptide occupies 20-66; that stretch reads EPLQARTDEATAAQEQIPTDNPEVVVSLAWDESLAPKDSVPGLRKNM. 3 disulfide bridges follow: C68–C96, C70–C85, and C75–C95.

It is found in the secreted. Its function is as follows. Has bacteriostatic activity against Gram-positive bacteria S.aureus and L.monocytogenes and Gram-negative bacterium E.coli and antifungal activity against C.neoformans. The polypeptide is Neutrophil defensin 3 (Macaca mulatta (Rhesus macaque)).